We begin with the raw amino-acid sequence, 445 residues long: Argininosuccinate synthase (445 aa).

ATP-binding positions include 17–25 (AFSGGLDTS) and Ala43. Residue Tyr99 participates in L-citrulline binding. 2 residues coordinate ATP: Gly129 and Thr131. Residues Thr131, Asn135, and Asp136 each coordinate L-aspartate. Asn135 provides a ligand contact to L-citrulline. An ATP-binding site is contributed by Asp136. Arg139 and Ser192 together coordinate L-citrulline. Asp194 is a binding site for ATP. Residues Thr201, Glu203, and Glu280 each coordinate L-citrulline.

It belongs to the argininosuccinate synthase family. Type 2 subfamily. As to quaternary structure, homotetramer.

It is found in the cytoplasm. The catalysed reaction is L-citrulline + L-aspartate + ATP = 2-(N(omega)-L-arginino)succinate + AMP + diphosphate + H(+). Its pathway is amino-acid biosynthesis; L-arginine biosynthesis; L-arginine from L-ornithine and carbamoyl phosphate: step 2/3. The chain is Argininosuccinate synthase from Bordetella bronchiseptica (strain ATCC BAA-588 / NCTC 13252 / RB50) (Alcaligenes bronchisepticus).